The primary structure comprises 399 residues: Imidazolonepropionase (399 aa).

Positions 74 and 76 each coordinate Fe(3+). Residues H74 and H76 each coordinate Zn(2+). Residues R83, Y146, and H176 each coordinate 4-imidazolone-5-propanoate. Y146 contributes to the N-formimidoyl-L-glutamate binding site. H238 lines the Fe(3+) pocket. Position 238 (H238) interacts with Zn(2+). Q241 is a 4-imidazolone-5-propanoate binding site. Position 312 (D312) interacts with Fe(3+). Residue D312 participates in Zn(2+) binding. Positions 314 and 316 each coordinate N-formimidoyl-L-glutamate. A 4-imidazolone-5-propanoate-binding site is contributed by S317.

Belongs to the metallo-dependent hydrolases superfamily. HutI family. The cofactor is Zn(2+). Fe(3+) is required as a cofactor.

Its subcellular location is the cytoplasm. The enzyme catalyses 4-imidazolone-5-propanoate + H2O = N-formimidoyl-L-glutamate. Its pathway is amino-acid degradation; L-histidine degradation into L-glutamate; N-formimidoyl-L-glutamate from L-histidine: step 3/3. Functionally, catalyzes the hydrolytic cleavage of the carbon-nitrogen bond in imidazolone-5-propanoate to yield N-formimidoyl-L-glutamate. It is the third step in the universal histidine degradation pathway. The sequence is that of Imidazolonepropionase from Deinococcus deserti (strain DSM 17065 / CIP 109153 / LMG 22923 / VCD115).